A 416-amino-acid chain; its full sequence is Calreticulin (416 aa).

An N-terminal signal peptide occupies residues 1–17 (MLLSVPLLLGLLGLAAA). Residues 18–197 (DPAIYFKEQF…NSQVESGSLE (180 aa)) are N-domain. Residue Q26 participates in Ca(2+) binding. K48 bears the N6-acetyllysine mark. Ca(2+) contacts are provided by K62 and K64. K64 carries the N6-(2-hydroxyisobutyryl)lysine modification. An intrachain disulfide couples C105 to C137. An alpha-D-glucoside contacts are provided by Y109, K111, Y128, and D135. K159 is subject to N6-acetyllysine. A 1-1 repeat occupies 191–202 (VESGSLEDDWDF). The 4 X approximate repeats stretch occupies residues 191-255 (VESGSLEDDW…DAKKPEDWDE (65 aa)). The tract at residues 193–277 (SGSLEDDWDF…NPEYKGEWKP (85 aa)) is disordered. The segment at 198–308 (DDWDFLPPKK…YSPDANIYAY (111 aa)) is P-domain. A compositionally biased stretch (basic and acidic residues) spans 207-251 (KIKDPDAAKPEDWDERAKIDDPTDSKPEDWDKPEHIPDPDAKKPE). Residue K209 is modified to N6-acetyllysine. 6 tandem repeats follow at residues 210–221 (DPDAAKPEDWDE), 227–238 (DPTDSKPEDWDK), 244–255 (DPDAKKPEDWDE), 259–269 (GEWEPPVIQNP), 273–283 (GEWKPRQIDNP), and 287–297 (GTWIHPEIDNP). The interaction with PPIB stretch occupies residues 237-270 (DKPEHIPDPDAKKPEDWDEEMDGEWEPPVIQNPE). Residues 252-261 (DWDEEMDGEW) show a composition bias toward acidic residues. The tract at residues 259-297 (GEWEPPVIQNPEYKGEWKPRQIDNPDYKGTWIHPEIDNP) is 3 X approximate repeats. The tract at residues 309 to 416 (DSFAVLGLDL…DATGQAKDEL (108 aa)) is C-domain. D317 serves as a coordination point for an alpha-D-glucoside. Position 328 (D328) interacts with Ca(2+). The segment at 350–416 (TKAAEKQMKD…DATGQAKDEL (67 aa)) is disordered. Positions 352 to 379 (AAEKQMKDKQDEEQRLKEEEEDKKRKEE) are enriched in basic and acidic residues. Residues 380 to 408 (EEAEDKEDEDDRDEDEDEEDEKEEDEEDA) show a composition bias toward acidic residues. The short motif at 413 to 416 (KDEL) is the Prevents secretion from ER element.

It belongs to the calreticulin family. In terms of assembly, monomer. Component of an EIF2 complex at least composed of CELF1/CUGBP1, CALR, CALR3, EIF2S1, EIF2S2, HSP90B1 and HSPA5. Interacts with GABARAP, NR3C1 and TRIM21. Interacts with PPIB and SPACA9. Interacts (via P-domain) with PDIA5. Interacts with PDIA3/ERp57. Interacts with CLCC1. Predentin and odontoblast.

Its subcellular location is the endoplasmic reticulum lumen. It is found in the cytoplasm. The protein resides in the cytosol. It localises to the secreted. The protein localises to the extracellular space. Its subcellular location is the extracellular matrix. It is found in the cell surface. The protein resides in the sarcoplasmic reticulum lumen. It localises to the cytoplasmic vesicle. The protein localises to the secretory vesicle. Its subcellular location is the cortical granule. It is found in the cytolytic granule. Functionally, calcium-binding chaperone that promotes folding, oligomeric assembly and quality control in the endoplasmic reticulum (ER) via the calreticulin/calnexin cycle. This lectin interacts transiently with almost all of the monoglucosylated glycoproteins that are synthesized in the ER. Interacts with the DNA-binding domain of NR3C1 and mediates its nuclear export. Involved in maternal gene expression regulation. May participate in oocyte maturation via the regulation of calcium homeostasis. Present in the cortical granules of non-activated oocytes, is exocytosed during the cortical reaction in response to oocyte activation and might participate in the block to polyspermy. The sequence is that of Calreticulin (Calr) from Rattus norvegicus (Rat).